Reading from the N-terminus, the 501-residue chain is Acetyl-coenzyme A carboxylase carboxyl transferase subunit beta, chloroplastic (501 aa).

The CoA carboxyltransferase N-terminal domain occupies 231–501 (LWIECENCYG…LIQNEKESRS (271 aa)). Cysteine 235, cysteine 238, cysteine 254, and cysteine 257 together coordinate Zn(2+). Residues 235-257 (CENCYGLNYKKILKSKMNICEHC) form a C4-type zinc finger.

Belongs to the AccD/PCCB family. Acetyl-CoA carboxylase is a heterohexamer composed of biotin carboxyl carrier protein, biotin carboxylase and 2 subunits each of ACCase subunit alpha and ACCase plastid-coded subunit beta (accD). Requires Zn(2+) as cofactor.

It is found in the plastid. The protein resides in the chloroplast stroma. It carries out the reaction N(6)-carboxybiotinyl-L-lysyl-[protein] + acetyl-CoA = N(6)-biotinyl-L-lysyl-[protein] + malonyl-CoA. It participates in lipid metabolism; malonyl-CoA biosynthesis; malonyl-CoA from acetyl-CoA: step 1/1. In terms of biological role, component of the acetyl coenzyme A carboxylase (ACC) complex. Biotin carboxylase (BC) catalyzes the carboxylation of biotin on its carrier protein (BCCP) and then the CO(2) group is transferred by the transcarboxylase to acetyl-CoA to form malonyl-CoA. The protein is Acetyl-coenzyme A carboxylase carboxyl transferase subunit beta, chloroplastic of Lotus japonicus (Lotus corniculatus var. japonicus).